The chain runs to 225 residues: PKHD-type hydroxylase YbiX (225 aa).

Residues 78–177 (TLSTPLFNRY…RVASFMWIQS (100 aa)) enclose the Fe2OG dioxygenase domain. Fe cation is bound by residues His-96, Asp-98, and His-158. Position 168 (Arg-168) interacts with 2-oxoglutarate.

It depends on Fe(2+) as a cofactor. L-ascorbate is required as a cofactor.

This chain is PKHD-type hydroxylase YbiX, found in Escherichia coli O7:K1 (strain IAI39 / ExPEC).